A 611-amino-acid polypeptide reads, in one-letter code: Actin-interacting protein 1 (611 aa).

WD repeat units lie at residues 57 to 96, 145 to 185, 188 to 227, 237 to 276, 322 to 361, 446 to 485, 489 to 528, 534 to 573, and 579 to 610; these read EHSH…HILK, GQAR…FKST, EHTK…KTGV, AHSG…VEKT, GHNK…SNRV, PISY…VSEV, VHPA…ELAH, FHTA…DHPI, and HAMS…WNVP.

It belongs to the WD repeat AIP1 family.

The protein localises to the cytoplasm. The protein resides in the cytoskeleton. In terms of biological role, induces disassembly of actin filaments in conjunction with ADF/cofilin family proteins. Regulator of actin organization in myofibrils. In Caenorhabditis elegans, this protein is Actin-interacting protein 1 (unc-78).